The following is a 336-amino-acid chain: tRNA N6-adenosine threonylcarbamoyltransferase (336 aa).

Residues His112 and His116 each coordinate Fe cation. Residues 136–140, Asp169, Gly182, and Asn276 each bind substrate; that span reads LVSGG. Residue Asp304 coordinates Fe cation.

Belongs to the KAE1 / TsaD family. Requires Fe(2+) as cofactor.

Its subcellular location is the cytoplasm. It carries out the reaction L-threonylcarbamoyladenylate + adenosine(37) in tRNA = N(6)-L-threonylcarbamoyladenosine(37) in tRNA + AMP + H(+). Functionally, required for the formation of a threonylcarbamoyl group on adenosine at position 37 (t(6)A37) in tRNAs that read codons beginning with adenine. Is involved in the transfer of the threonylcarbamoyl moiety of threonylcarbamoyl-AMP (TC-AMP) to the N6 group of A37, together with TsaE and TsaB. TsaD likely plays a direct catalytic role in this reaction. The chain is tRNA N6-adenosine threonylcarbamoyltransferase from Francisella tularensis subsp. tularensis (strain FSC 198).